We begin with the raw amino-acid sequence, 375 residues long: Chaperone protein DnaJ (375 aa).

The J domain maps to 5 to 69 (DYYEILGIDK…QKRAQYDQFG (65 aa)). The segment at 131–213 (GKETDIEIPK…CGGSGTVQKN (83 aa)) adopts a CR-type zinc-finger fold. Zn(2+)-binding residues include cysteine 144, cysteine 147, cysteine 161, cysteine 164, cysteine 187, cysteine 190, cysteine 201, and cysteine 204. CXXCXGXG motif repeat units follow at residues 144–151 (CDTCNGSG), 161–168 (CSHCHGSG), 187–194 (CNYCQGTG), and 201–208 (CNTCGGSG).

Belongs to the DnaJ family. In terms of assembly, homodimer. The cofactor is Zn(2+).

Its subcellular location is the cytoplasm. Functionally, participates actively in the response to hyperosmotic and heat shock by preventing the aggregation of stress-denatured proteins and by disaggregating proteins, also in an autonomous, DnaK-independent fashion. Unfolded proteins bind initially to DnaJ; upon interaction with the DnaJ-bound protein, DnaK hydrolyzes its bound ATP, resulting in the formation of a stable complex. GrpE releases ADP from DnaK; ATP binding to DnaK triggers the release of the substrate protein, thus completing the reaction cycle. Several rounds of ATP-dependent interactions between DnaJ, DnaK and GrpE are required for fully efficient folding. Also involved, together with DnaK and GrpE, in the DNA replication of plasmids through activation of initiation proteins. In Oceanobacillus iheyensis (strain DSM 14371 / CIP 107618 / JCM 11309 / KCTC 3954 / HTE831), this protein is Chaperone protein DnaJ.